The following is a 411-amino-acid chain: Glucose-1-phosphate adenylyltransferase (411 aa).

Alpha-D-glucose 1-phosphate-binding positions include Gly-164, 179 to 180, and Ser-197; that span reads EK.

It belongs to the bacterial/plant glucose-1-phosphate adenylyltransferase family. In terms of assembly, homotetramer.

The enzyme catalyses alpha-D-glucose 1-phosphate + ATP + H(+) = ADP-alpha-D-glucose + diphosphate. The protein operates within glycan biosynthesis; glycogen biosynthesis. In terms of biological role, involved in the biosynthesis of ADP-glucose, a building block required for the elongation reactions to produce glycogen. Catalyzes the reaction between ATP and alpha-D-glucose 1-phosphate (G1P) to produce pyrophosphate and ADP-Glc. This chain is Glucose-1-phosphate adenylyltransferase, found in Corynebacterium kroppenstedtii (strain DSM 44385 / JCM 11950 / CIP 105744 / CCUG 35717).